The sequence spans 457 residues: Phosphoglucosamine mutase (457 aa).

Serine 109 functions as the Phosphoserine intermediate in the catalytic mechanism. Positions 109, 251, 253, and 255 each coordinate Mg(2+). The residue at position 109 (serine 109) is a Phosphoserine.

Belongs to the phosphohexose mutase family. Mg(2+) is required as a cofactor. In terms of processing, activated by phosphorylation.

The catalysed reaction is alpha-D-glucosamine 1-phosphate = D-glucosamine 6-phosphate. In terms of biological role, catalyzes the conversion of glucosamine-6-phosphate to glucosamine-1-phosphate. This is Phosphoglucosamine mutase from Bdellovibrio bacteriovorus (strain ATCC 15356 / DSM 50701 / NCIMB 9529 / HD100).